Here is a 170-residue protein sequence, read N- to C-terminus: MLKKKWMVGLLAGCLAAGGFSYNAFATENNENRQASSKTDALTEQEAEAIAKTVVDGTVEDIDRDLYNGKEVYEVEIEKEGEDYDVYVDIHTKQALNDPLKEKAEQVAITKEEAEEIALKQTGGTVTESKLDEDDGAYIYEMEIQTKQGTETEFEISAKDGRIIKQEIDD.

An N-terminal signal peptide occupies residues 1-26 (MLKKKWMVGLLAGCLAAGGFSYNAFA).

This is an uncharacterized protein from Bacillus subtilis (strain 168).